The chain runs to 484 residues: Serine protease HTR4 (484 aa).

The N-terminal stretch at 1 to 28 (MARPLQRPAGLGPFVLLWLLLPAPSGRG) is a signal peptide. Residues 36-114 (PVPRCPAACE…GRPLGTCGCP (79 aa)) form the IGFBP N-terminal domain. 8 disulfides stabilise this stretch: Cys-40–Cys-66, Cys-44–Cys-68, Cys-49–Cys-69, Cys-55–Cys-72, Cys-80–Cys-94, Cys-88–Cys-111, Cys-113–Cys-132, and Cys-121–Cys-157. The region spanning 105–159 (GRPLGTCGCPAAGATVCGSDGRTYRSLCALRAENRAARLRGALPAVPVQKGDCGD) is the Kazal-like domain. The tract at residues 209-369 (ASGFIVSEDG…IPSDRIRQFL (161 aa)) is serine protease. Catalysis depends on charge relay system residues His-225, Asp-255, and Ser-333. Residues 390–472 (LRMLPLTMNL…LSLLVRRKSQ (83 aa)) enclose the PDZ domain.

Belongs to the peptidase S1C family.

The protein resides in the secreted. Functionally, serine protease. The sequence is that of Serine protease HTR4 (HTRA4) from Bos taurus (Bovine).